The chain runs to 477 residues: tRNA-2-methylthio-N(6)-dimethylallyladenosine synthase (477 aa).

Residues 13 to 130 enclose the MTTase N-terminal domain; it reads GGLFIKTYGC…LPAMIEEALA (118 aa). Cysteine 22, cysteine 59, cysteine 93, cysteine 178, cysteine 182, and cysteine 185 together coordinate [4Fe-4S] cluster. The Radical SAM core domain maps to 164 to 396; it reads ESNGVSAFVS…QAMLNEQTAA (233 aa). In terms of domain architecture, TRAM spans 399–462; that stretch reads EGMVGTTQRV…ANSLKGKLVA (64 aa).

Belongs to the methylthiotransferase family. MiaB subfamily. In terms of assembly, monomer. It depends on [4Fe-4S] cluster as a cofactor.

The protein resides in the cytoplasm. The catalysed reaction is N(6)-dimethylallyladenosine(37) in tRNA + (sulfur carrier)-SH + AH2 + 2 S-adenosyl-L-methionine = 2-methylsulfanyl-N(6)-dimethylallyladenosine(37) in tRNA + (sulfur carrier)-H + 5'-deoxyadenosine + L-methionine + A + S-adenosyl-L-homocysteine + 2 H(+). Functionally, catalyzes the methylthiolation of N6-(dimethylallyl)adenosine (i(6)A), leading to the formation of 2-methylthio-N6-(dimethylallyl)adenosine (ms(2)i(6)A) at position 37 in tRNAs that read codons beginning with uridine. The protein is tRNA-2-methylthio-N(6)-dimethylallyladenosine synthase of Hydrogenovibrio crunogenus (strain DSM 25203 / XCL-2) (Thiomicrospira crunogena).